The following is a 100-amino-acid chain: Ubiquitin-related modifier 1 homolog (100 aa).

Glycine 100 is subject to 1-thioglycine. Residue glycine 100 forms a Glycyl lysine isopeptide (Gly-Lys) (interchain with K-? in acceptor proteins) linkage.

This sequence belongs to the URM1 family. Post-translationally, C-terminal thiocarboxylation occurs in 2 steps, it is first acyl-adenylated (-COAMP) via the hesA/moeB/thiF part of the MOCS3 homolog, then thiocarboxylated (-COSH) via the rhodanese domain of the MOCS3 homolog.

The protein localises to the cytoplasm. Its pathway is tRNA modification; 5-methoxycarbonylmethyl-2-thiouridine-tRNA biosynthesis. Acts as a sulfur carrier required for 2-thiolation of mcm(5)S(2)U at tRNA wobble positions of cytosolic tRNA(Lys), tRNA(Glu) and tRNA(Gln). Serves as sulfur donor in tRNA 2-thiolation reaction by being thiocarboxylated (-COSH) at its C-terminus by MOCS3. The sulfur is then transferred to tRNA to form 2-thiolation of mcm(5)S(2)U. Also acts as a ubiquitin-like protein (UBL) that is covalently conjugated via an isopeptide bond to lysine residues of target proteins. The thiocarboxylated form serves as substrate for conjugation and oxidative stress specifically induces the formation of UBL-protein conjugates. The polypeptide is Ubiquitin-related modifier 1 homolog (Caenorhabditis elegans).